A 1034-amino-acid polypeptide reads, in one-letter code: Potassium-transporting ATPase alpha chain 1 (1034 aa).

Over 2-97 the chain is Cytoplasmic; that stretch reads GKAENYELYQ…NALRPPRGTP (96 aa). Residues Tyr-7 and Tyr-10 each carry the phosphotyrosine modification. The disordered stretch occupies residues 13 to 40; that stretch reads ELGPGPSGDMAAKMSKKKAGRGGGKRKE. The segment covering 26–39 has biased composition (basic residues); it reads MSKKKAGRGGGKRK. Ser-27 is subject to Phosphoserine; by PKA and PKC. Residues 98–118 form a helical membrane-spanning segment; sequence EYVKFARQLAGGLQCLMWVAA. The Lumenal portion of the chain corresponds to 119-141; that stretch reads AICLIAFAIQASEGDLTTDDNLY. A helical transmembrane segment spans residues 142-162; sequence LALALIAVVVVTGCFGYYQEF. At 163–298 the chain is on the cytoplasmic side; it reads KSTNIIASFK…NEKTPIAIEI (136 aa). Positions 222–244 are disordered; the sequence is KVDNSSLTGESEPQTRSPECTHE. Over residues 225 to 239 the composition is skewed to polar residues; it reads NSSLTGESEPQTRSP. Residues 299 to 318 traverse the membrane as a helical segment; it reads EHFVDIIAGLAILFGATFFI. Over 319-330 the chain is Lumenal; it reads VAMCIGYTFLRA. Residues 331–348 form a helical membrane-spanning segment; it reads MVFFMAIVVAYVPEGLLA. The K(+) site is built by Val-339, Ala-340, Val-342, and Glu-344. Residues 349 to 782 are Cytoplasmic-facing; it reads TVTVCLSLTA…EQGRLIFDNL (434 aa). Catalysis depends on Asp-386, which acts as the 4-aspartylphosphate intermediate. Mg(2+) contacts are provided by Asp-386 and Thr-388. A phosphoserine mark is found at Ser-462 and Ser-600. Mg(2+)-binding residues include Asp-727 and Asp-731. Residues 783–802 form a helical membrane-spanning segment; that stretch reads KKSIAYTLTKNIPELTPYLI. Residue Glu-796 coordinates K(+). Residues 803 to 812 are Lumenal-facing; it reads YITVSVPLPL. Residues 813-833 traverse the membrane as a helical segment; it reads GCITILFIELCTDIFPSVSLA. Position 821 (Glu-821) interacts with K(+). At 834 to 853 the chain is on the cytoplasmic side; sequence YEKAESDIMHLRPRNPKRDR. Phosphoserine is present on Ser-839. A helical transmembrane segment spans residues 854–876; it reads LVNEPLAAYSYFQIGAIQSFAGF. The Lumenal portion of the chain corresponds to 877–928; sequence TDYFTAMAQEGWFPLLCVGLRPQWENHHLQDLQDSYGQEWTFGQRLYQQYTC. A helical membrane pass occupies residues 929 to 948; sequence YTVFFISIEMCQIADVLIRK. Over 949–962 the chain is Cytoplasmic; the sequence is TRRLSAFQQGFFRN. Ser-953 carries the post-translational modification Phosphoserine; by PKA. A helical membrane pass occupies residues 963-981; it reads RILVIAIVFQVCIGCFLCY. At 982–996 the chain is on the lumenal side; the sequence is CPGMPNIFNFMPIRF. The chain crosses the membrane as a helical span at residues 997 to 1017; that stretch reads QWWLVPMPFGLLIFVYDEIRK. Over 1018–1034 the chain is Cytoplasmic; it reads LGVRCCPGSWWDQELYY.

It belongs to the cation transport ATPase (P-type) (TC 3.A.3) family. Type IIC subfamily. In terms of assembly, the gastric H(+)/K(+) ATPase pump is composed of the catalytic alpha subunit ATP4A and the regulatory beta subunit ATP4B. Interacts (via the P-domain) with ATP4B (via N-terminus); this interaction stabilizes the lumenal-open E2 conformation state and prevents the reverse reaction of the transport cycle.

Its subcellular location is the apical cell membrane. The protein localises to the cell membrane. The enzyme catalyses K(+)(out) + ATP + H2O + H(+)(in) = K(+)(in) + ADP + phosphate + 2 H(+)(out). With respect to regulation, down-regulated by K(+)-competitive acid blockers (P-CABs) such as vonoprazan. Its function is as follows. The catalytic subunit of the gastric H(+)/K(+) ATPase pump which transports H(+) ions in exchange for K(+) ions across the apical membrane of parietal cells. Uses ATP as an energy source to pump H(+) ions to the gastric lumen while transporting K(+) ion from the lumen into the cell. Remarkably generates a million-fold proton gradient across the gastric parietal cell membrane, acidifying the gastric juice down to pH 1. Within a transport cycle, the transfer of a H(+) ion across the membrane is coupled to ATP hydrolysis and is associated with a transient phosphorylation that shifts the pump conformation from inward-facing (E1) to outward-facing state (E2). The release of the H(+) ion in the stomach lumen is followed by binding of K(+) ion converting the pump conformation back to the E1 state. This chain is Potassium-transporting ATPase alpha chain 1 (ATP4A), found in Sus scrofa (Pig).